The sequence spans 333 residues: MVQKGVVFGVLLILFICSTLTSADSKPNPTKEEEPAKKPDEVSVKSGGPEVSEDQYRHRCCAWGPGRKYCKRWCANAEEAAAAIPEASEELAQEEAPVYSEDQWGRRCCGWGPGRRYCVRWCQNAEEAAAAIPEATEKAQEAPVYSEDQWGRRCCGWGPGRRYCVRWCQNAEEAAAAVAIPEASEKAQEGPVYSEDQWGRRCCGWGPGRRYCVRWCSNAADEVATPEDVEPGQYGRRCCNWGPGRRYCKRWCHNAAEEATLKAFEEEAAREQPVYSEDQWGRRCCGWGPGRRYCRRWCQSAEEAAAFQAGEVTASLMLIMFKACPCMGPVPSV.

A signal peptide spans 1-23 (MVQKGVVFGVLLILFICSTLTSA). Residues 23–52 (ADSKPNPTKEEEPAKKPDEVSVKSGGPEVS) form a disordered region. Residues 24–54 (DSKPNPTKEEEPAKKPDEVSVKSGGPEVSED) constitute a propeptide, acidic peptide 1. Residues 29–43 (PTKEEEPAKKPDEVS) show a composition bias toward basic and acidic residues. Gln55 bears the Pyrrolidone carboxylic acid mark. Disulfide bonds link Cys60/Cys70 and Cys61/Cys74. A propeptide spans 75-102 (ANAEEAAAAIPEASEELAQEEAPVYSED) (acidic peptide 2). Pyrrolidone carboxylic acid is present on Gln103. Disulfide bonds link Cys108–Cys118 and Cys109–Cys122. The propeptide at 123–148 (QNAEEAAAAIPEATEKAQEAPVYSED) is acidic peptide 3. Gln149 carries the post-translational modification Pyrrolidone carboxylic acid. 2 cysteine pairs are disulfide-bonded: Cys154/Cys164 and Cys155/Cys168. Positions 169 to 196 (QNAEEAAAAVAIPEASEKAQEGPVYSED) are cleaved as a propeptide — acidic peptide 4. Residue Gln197 is modified to Pyrrolidone carboxylic acid. Intrachain disulfides connect Cys202-Cys212 and Cys203-Cys216. A propeptide spans 217-232 (SNAADEVATPEDVEPG) (acidic peptide 5). Gln233 bears the Pyrrolidone carboxylic acid mark. 2 disulfide bridges follow: Cys238-Cys248 and Cys239-Cys252. Positions 253–278 (HNAAEEATLKAFEEEAAREQPVYSED) are cleaved as a propeptide — acidic peptide 6. A Pyrrolidone carboxylic acid modification is found at Gln279. 2 disulfide bridges follow: Cys284-Cys294 and Cys285-Cys298. A propeptide spans 299 to 333 (QSAEEAAAFQAGEVTASLMLIMFKACPCMGPVPSV) (acidic peptide 7).

In terms of processing, the N-terminal of all peptides are blocked. Post-translationally, the 4 cysteine residues of all peptides are involved in intrachain disulfide bonds.

It localises to the secreted. Its function is as follows. Plays a role in the defense of the germinating seed against microorganisms, by inhibiting the growth of a range of filamentous fungi and bacteria, especially Gram-positive bacteria. Not cytotoxic for cultured human cells and are the smallest known plant-derived antimicrobial peptides. Peptide IB-AMP4 has a higher antifungal activity than IB-AMP1. The protein is Antimicrobial peptides (AMP) of Impatiens balsamina (Balsam).